The primary structure comprises 378 residues: Chorismate synthase (378 aa).

Position 50 (Arg50) interacts with NADP(+). Residues Arg127–Ser129, Asn255–Ala256, Gly300, Lys315–Ser319, and Arg342 contribute to the FMN site.

It belongs to the chorismate synthase family. FMNH2 serves as cofactor.

It catalyses the reaction 5-O-(1-carboxyvinyl)-3-phosphoshikimate = chorismate + phosphate. The protein operates within metabolic intermediate biosynthesis; chorismate biosynthesis; chorismate from D-erythrose 4-phosphate and phosphoenolpyruvate: step 7/7. Functionally, catalyzes the anti-1,4-elimination of the C-3 phosphate and the C-6 proR hydrogen from 5-enolpyruvylshikimate-3-phosphate (EPSP) to yield chorismate, which is the branch point compound that serves as the starting substrate for the three terminal pathways of aromatic amino acid biosynthesis. This reaction introduces a second double bond into the aromatic ring system. In Methanocaldococcus jannaschii (strain ATCC 43067 / DSM 2661 / JAL-1 / JCM 10045 / NBRC 100440) (Methanococcus jannaschii), this protein is Chorismate synthase.